The sequence spans 313 residues: Coproporphyrin III ferrochelatase (313 aa).

Residues His-191 and Glu-270 each coordinate Fe(2+).

It belongs to the ferrochelatase family.

Its subcellular location is the cytoplasm. The enzyme catalyses Fe-coproporphyrin III + 2 H(+) = coproporphyrin III + Fe(2+). Its pathway is porphyrin-containing compound metabolism; protoheme biosynthesis. Functionally, involved in coproporphyrin-dependent heme b biosynthesis. Catalyzes the insertion of ferrous iron into coproporphyrin III to form Fe-coproporphyrin III. The chain is Coproporphyrin III ferrochelatase from Enterococcus faecalis (strain ATCC 700802 / V583).